Reading from the N-terminus, the 867-residue chain is Alanine--tRNA ligase (867 aa).

Residues histidine 555, histidine 559, cysteine 657, and histidine 661 each coordinate Zn(2+).

Belongs to the class-II aminoacyl-tRNA synthetase family. Zn(2+) is required as a cofactor.

It localises to the cytoplasm. It carries out the reaction tRNA(Ala) + L-alanine + ATP = L-alanyl-tRNA(Ala) + AMP + diphosphate. Catalyzes the attachment of alanine to tRNA(Ala) in a two-step reaction: alanine is first activated by ATP to form Ala-AMP and then transferred to the acceptor end of tRNA(Ala). Also edits incorrectly charged Ser-tRNA(Ala) and Gly-tRNA(Ala) via its editing domain. The protein is Alanine--tRNA ligase of Psychromonas ingrahamii (strain DSM 17664 / CCUG 51855 / 37).